Consider the following 37-residue polypeptide: MIEVFLFGIVLGLIPITLTGLFVTAYLQYRRGDQLDL.

Residues phenylalanine 5–alanine 25 traverse the membrane as a helical segment.

Belongs to the PetG family. The 4 large subunits of the cytochrome b6-f complex are cytochrome b6, subunit IV (17 kDa polypeptide, PetD), cytochrome f and the Rieske protein, while the 4 small subunits are PetG, PetL, PetM and PetN. The complex functions as a dimer.

The protein resides in the plastid. Its subcellular location is the chloroplast thylakoid membrane. Component of the cytochrome b6-f complex, which mediates electron transfer between photosystem II (PSII) and photosystem I (PSI), cyclic electron flow around PSI, and state transitions. PetG is required for either the stability or assembly of the cytochrome b6-f complex. The chain is Cytochrome b6-f complex subunit 5 from Phalaenopsis aphrodite subsp. formosana (Moth orchid).